Here is a 217-residue protein sequence, read N- to C-terminus: Small ribosomal subunit protein uS3c (217 aa).

A KH type-2 domain is found at 47 to 119; it reads VRTHIKSSSN…KLHIAIEKVA (73 aa).

The protein belongs to the universal ribosomal protein uS3 family. As to quaternary structure, part of the 30S ribosomal subunit.

It is found in the plastid. The protein resides in the chloroplast. This is Small ribosomal subunit protein uS3c (rps3) from Pinus thunbergii (Japanese black pine).